Reading from the N-terminus, the 295-residue chain is Iodotyrosine deiodinase (295 aa).

Residues valine 3–phenylalanine 23 traverse the membrane as a helical segment. A disordered region spans residues lysine 29–proline 81. The span at glutamate 63–glutamate 75 shows a compositional bias: acidic residues. Residues arginine 106 to arginine 110, serine 134, and serine 134 to glycine 135 contribute to the FMN site. Residues alanine 136, glutamate 163, tyrosine 167, and lysine 188 each contribute to the 3-iodo-L-tyrosine site. FMN is bound by residues threonine 243–threonine 245 and arginine 285.

This sequence belongs to the nitroreductase family. It depends on FMN as a cofactor.

Its subcellular location is the membrane. It catalyses the reaction 2 iodide + L-tyrosine + 2 NADP(+) = 3,5-diiodo-L-tyrosine + 2 NADPH + H(+). The enzyme catalyses iodide + L-tyrosine + NADP(+) = 3-iodo-L-tyrosine + NADPH. The catalysed reaction is 3-iodo-L-tyrosine + iodide + NADP(+) = 3,5-diiodo-L-tyrosine + NADPH + H(+). It carries out the reaction L-tyrosine + chloride + NADP(+) = 3-chloro-L-tyrosine + NADPH. It catalyses the reaction bromide + L-tyrosine + NADP(+) = 3-bromo-L-tyrosine + NADPH. Functionally, catalyzes the dehalogenation of halotyrosines such as 3,5-diiodo-L-tyrosine. Likely to also catalyze the dehalogenation of other halotyrosines such as 3-bromo-L-tyrosine, 3-chloro-L-tyrosine and 3-iodo-L-tyrosine. This chain is Iodotyrosine deiodinase (iyd), found in Danio rerio (Zebrafish).